Reading from the N-terminus, the 554-residue chain is Wee1-like protein kinase 2-B (554 aa).

Disordered regions lie at residues 1-86 (MRMA…GGEC) and 145-182 (TLVN…DSQM). Position 38 is a phosphoserine (S38). Polar residues-rich tracts occupy residues 38–48 (SPVSSWRTNNC) and 147–163 (VNVN…THFQ). One can recognise a Protein kinase domain in the interval 213–487 (FLEIEKIGAG…AKNSVLRRCV (275 aa)). Residues 219-227 (IGAGEFGSV) and K242 each bind ATP. Catalysis depends on D340, which acts as the Proton acceptor. Mg(2+) contacts are provided by N345 and D377. Positions 490 to 516 (AAELQKQLNVEKFKTAMLERELQAAKL) form a coiled coil.

The protein belongs to the protein kinase superfamily. Ser/Thr protein kinase family. WEE1 subfamily. Interacts with cdca3. Ubiquitinated and degraded at the onset of G2/M phase. Post-translationally, phosphorylated during M and G1 phases. Interacts with cdca3 when phosphorylated at Ser-38.

The protein resides in the nucleus. It carries out the reaction L-tyrosyl-[protein] + ATP = O-phospho-L-tyrosyl-[protein] + ADP + H(+). In terms of biological role, oocyte and early embryo-specific protein tyrosine kinase that phosphorylates and inhibits cdk1 and acts as a regulator of meiosis in oocytes. Required to ensure the meiotic cell cycle in oocytes by phosphorylating cdk1 at 'Tyr-15', leading to inhibit cdk1 activity and prevent meiosis. This is Wee1-like protein kinase 2-B (wee2-b) from Xenopus laevis (African clawed frog).